Reading from the N-terminus, the 367-residue chain is uncharacterized protein (367 aa).

It localises to the mitochondrion. This is an uncharacterized protein from Paramecium tetraurelia.